The primary structure comprises 132 residues: MRSWFVFVALLAVVFLPSSLDALKCIQCDSQPNRDECKTTLPEARDCPQTVNNYCFKTETFNKNGDLSMLRRYCNVLASTQNGCVDLPGGLGKKCEYSCNTDGCNSVTGLVASRAAYLVTLLPIIFYALSRQ.

The signal sequence occupies residues 1–19; it reads MRSWFVFVALLAVVFLPSS.

Belongs to the scoloptoxin-05 family. In terms of processing, contains 5 disulfide bonds. In terms of tissue distribution, expressed by the venom gland.

The protein resides in the secreted. This chain is U-scoloptoxin(05)-Er3a, found in Ethmostigmus rubripes (Giant centipede).